The primary structure comprises 248 residues: Conoporin-Cn1 (248 aa).

A signal peptide spans 1–23 (MGVQFPALKTMVTVFLLLMGNMS). The interval 45–64 (TPGSSLYGVALKDLADTSYN) is N-terminal region. Residues G120, S138, P140, Y167, and Y171 each coordinate phosphocholine.

The protein belongs to the actinoporin family. Conoidea subfamily. Octamer or nonamer in membranes. Monomer in the soluble state. In terms of processing, 9 isoforms are detected in the injectable venom, mainly corresponding to different oxidative states. Expressed by the venom duct.

The protein localises to the secreted. The protein resides in the nematocyst. Its subcellular location is the target cell membrane. Its function is as follows. Pore-forming protein that forms pores of around 1 nm and causes cardiac stimulation and cytolysis. This chain is Conoporin-Cn1, found in Conus consors (Singed cone).